The sequence spans 80 residues: Large ribosomal subunit protein bL31B (80 aa).

It belongs to the bacterial ribosomal protein bL31 family. Type B subfamily. As to quaternary structure, part of the 50S ribosomal subunit.

The protein is Large ribosomal subunit protein bL31B of Oenococcus oeni (strain ATCC BAA-331 / PSU-1).